Reading from the N-terminus, the 387-residue chain is Pepsin II-2/3 (387 aa).

An N-terminal signal peptide occupies residues M1 to C15. Residues I16–F59 constitute a propeptide, activation peptide. The Peptidase A1 domain maps to Y75 to A384. D93 is an active-site residue. An intrachain disulfide couples C106 to C111. S129 is modified (phosphoserine). The cysteines at positions 267 and 271 are disulfide-linked. D276 is an active-site residue. C310 and C343 are oxidised to a cystine.

Belongs to the peptidase A1 family.

It is found in the secreted. It carries out the reaction Preferential cleavage: hydrophobic, preferably aromatic, residues in P1 and P1' positions. Cleaves 1-Phe-|-Val-2, 4-Gln-|-His-5, 13-Glu-|-Ala-14, 14-Ala-|-Leu-15, 15-Leu-|-Tyr-16, 16-Tyr-|-Leu-17, 23-Gly-|-Phe-24, 24-Phe-|-Phe-25 and 25-Phe-|-Tyr-26 bonds in the B chain of insulin.. In terms of biological role, shows particularly broad specificity; although bonds involving phenylalanine and leucine are preferred, many others are also cleaved to some extent. In Oryctolagus cuniculus (Rabbit), this protein is Pepsin II-2/3.